A 115-amino-acid polypeptide reads, in one-letter code: Cell division topological specificity factor (115 aa).

The interval 93-115 is disordered; the sequence is QLKEPKNQSELDSPETEGTDQKS. Positions 104–115 are enriched in acidic residues; the sequence is DSPETEGTDQKS.

The protein belongs to the MinE family.

Prevents the cell division inhibition by proteins MinC and MinD at internal division sites while permitting inhibition at polar sites. This ensures cell division at the proper site by restricting the formation of a division septum at the midpoint of the long axis of the cell. The chain is Cell division topological specificity factor from Prochlorococcus marinus (strain NATL1A).